A 458-amino-acid polypeptide reads, in one-letter code: Glutamyl-tRNA(Gln) amidotransferase subunit D (458 aa).

Residues 97–434 enclose the Asparaginase/glutaminase domain; sequence PNVSVMSTGG…KEVERLMRTN (338 aa). Active-site residues include Thr-107, Thr-185, Asp-186, and Lys-264.

The protein belongs to the asparaginase 1 family. GatD subfamily. Heterodimer of GatD and GatE.

It catalyses the reaction L-glutamyl-tRNA(Gln) + L-glutamine + ATP + H2O = L-glutaminyl-tRNA(Gln) + L-glutamate + ADP + phosphate + H(+). Allows the formation of correctly charged Gln-tRNA(Gln) through the transamidation of misacylated Glu-tRNA(Gln) in organisms which lack glutaminyl-tRNA synthetase. The reaction takes place in the presence of glutamine and ATP through an activated gamma-phospho-Glu-tRNA(Gln). The GatDE system is specific for glutamate and does not act on aspartate. The polypeptide is Glutamyl-tRNA(Gln) amidotransferase subunit D (Methanopyrus kandleri (strain AV19 / DSM 6324 / JCM 9639 / NBRC 100938)).